We begin with the raw amino-acid sequence, 1840 residues long: Collagen alpha-1(V) chain (1840 aa).

An N-terminal signal peptide occupies residues 1–30 (MDVHTRWKAPRPGAPLLSSPLLLLLLLLWA). A Laminin G-like domain is found at 72–244 (DVAYRVSKDA…DYCEHYSPDC (173 aa)). A nonhelical region region spans residues 231 to 445 (RAAYDYCEHY…MPANQDTIYE (215 aa)). 8 positions are modified to sulfotyrosine: Tyr234, Tyr236, Tyr240, Tyr262, Tyr263, Tyr336, Tyr338, and Tyr344. Disordered regions lie at residues 241-547 (SPDC…QESQ) and 561-1576 (GPAG…EVIQ). Positions 258–268 (NPDEYYPEGEG) are enriched in acidic residues. Composition is skewed to low complexity over residues 335-352 (DYDY…PYED), 375-387 (PTST…SSNP), and 462-471 (IIEPGMLIEG). The segment at 446–560 (GIGGPRGEKG…ILQQARLALR (115 aa)) is interrupted collagenous region. Residues 472–487 (PPGPEGPAGLPGPPGT) show a composition bias toward pro residues. 2 stretches are compositionally biased toward low complexity: residues 508 to 525 (LPGA…LMLP) and 561 to 572 (GPAGPMGLTGRP). The triple-helical region stretch occupies residues 561–1572 (GPAGPMGLTG…GLPGPPGPPG (1012 aa)). A 4-hydroxyproline mark is found at Pro572, Pro578, and Pro623. Lys629 carries the 5-hydroxylysine modification. Pro641 bears the 4-hydroxyproline mark. Lys644 carries the post-translational modification 5-hydroxylysine. 4-hydroxyproline is present on residues Pro650, Pro656, Pro659, Pro677, and Pro680. Residues 673–688 (PRGLPGEPGPRGLLGP) show a composition bias toward low complexity. A 3-hydroxyproline mark is found at Pro682 and Pro688. Positions 689–698 (KGPPGPPGPP) are enriched in pro residues. 3 positions are modified to 4-hydroxyproline: Pro692, Pro698, and Pro707. The residue at position 710 (Lys710) is a 5-hydroxylysine. 4 positions are modified to 4-hydroxyproline: Pro719, Pro722, Pro728, and Pro734. Over residues 724-743 (QQGNPGAQGLPGPQGAIGPP) the composition is skewed to low complexity. Lys746 is subject to 5-hydroxylysine. A compositionally biased stretch (low complexity) spans 749-758 (LGKPGLPGMP). 4-hydroxyproline is present on residues Pro752, Pro758, Pro764, Pro767, and Pro773. Lys776 is modified (5-hydroxylysine). Pro782 and Pro791 each carry 4-hydroxyproline. A 5-hydroxylysine mark is found at Lys797, Lys806, Lys809, and Lys812. Residue Pro818 is modified to 4-hydroxyproline. 5-hydroxylysine is present on Lys821. Pro836 carries the post-translational modification 4-hydroxyproline. The span at 839–848 (RGEDGPEGPK) shows a compositional bias: basic and acidic residues. 2 positions are modified to 5-hydroxylysine: Lys848 and Lys866. 4-hydroxyproline occurs at positions 872, 875, and 878. Position 884 is a 5-hydroxylysine (Lys884). Pro890 and Pro893 each carry 4-hydroxyproline. A 5-hydroxylysine modification is found at Lys899. Pro905 and Pro908 each carry 4-hydroxyproline. The span at 910-919 (PRGQRGPTGP) shows a compositional bias: low complexity. 4-hydroxyproline is present on residues Pro932 and Pro947. Low complexity-rich tracts occupy residues 973 to 992 (KDGL…QGKT) and 1001 to 1013 (VGPQ…TGPM). 4 positions are modified to 4-hydroxyproline: Pro1019, Pro1022, Pro1025, and Pro1031. Residues 1090 to 1106 (SPGERGPAGAAGPIGIP) are compositionally biased toward low complexity. Over residues 1108–1117 (RPGPQGPPGP) the composition is skewed to pro residues. A 4-hydroxyproline mark is found at Pro1223 and Pro1226. Residues 1261-1270 (PSGAPGADGP) are compositionally biased toward low complexity. Over residues 1296 to 1305 (GLPGEGGPLG) the composition is skewed to gly residues. 2 stretches are compositionally biased toward pro residues: residues 1382-1400 (TGEP…PGPA) and 1456-1471 (SPGP…PPGL). Residues Pro1469 and Pro1472 each carry the 4-hydroxyproline modification. Over residues 1487-1496 (PGLIGLIGPP) the composition is skewed to low complexity. Pro residues predominate over residues 1528 to 1543 (PLGPPGPPGLPGPPGP). Residues 1544–1556 (KGAKGSSGPTGPK) are compositionally biased toward low complexity. The segment at 1573–1607 (EVIQPLPIQASRTRRNIDASQLLDDGAGESYVDYA) is nonhelical region. Sulfotyrosine is present on residues Tyr1603 and Tyr1606. The Fibrillar collagen NC1 domain maps to 1611–1839 (EEIFGSLNSL…GFEVGPACFL (229 aa)).

It belongs to the fibrillar collagen family. As to quaternary structure, trimers of two alpha 1(V) and one alpha 2(V) chains in most tissues and trimers of one alpha 1(V), one alpha 2(V), and one alpha 3(V) chains in placenta. Interacts with CSPG4. In terms of processing, prolines at the third position of the tripeptide repeating unit (G-X-Y) are hydroxylated in some or all of the chains. Sulfated on 40% of tyrosines. Post-translationally, hydroxylation on proline residues within the sequence motif, GXPG, is most likely to be 4-hydroxy as this fits the requirement for 4-hydroxylation in vertebrates. As to expression, a high molecular weight form was detected in Schwann cells and peripheral nerve. A lower, probably processed form, is detected in all other tissues tested (at protein level).

It localises to the secreted. The protein localises to the extracellular space. It is found in the extracellular matrix. Its function is as follows. Type V collagen is a member of group I collagen (fibrillar forming collagen). It is a minor connective tissue component of nearly ubiquitous distribution. Type V collagen binds to DNA, heparan sulfate, thrombospondin, heparin, and insulin. This Rattus norvegicus (Rat) protein is Collagen alpha-1(V) chain (Col5a1).